The sequence spans 276 residues: Diaminopimelate epimerase (276 aa).

N13, Q46, and N66 together coordinate substrate. The active-site Proton donor is the C75. Substrate-binding positions include 76-77 (GN), N159, N192, and 210-211 (ER). Residue C219 is the Proton acceptor of the active site. 220–221 (GT) contacts substrate.

The protein belongs to the diaminopimelate epimerase family. Homodimer.

It localises to the cytoplasm. The enzyme catalyses (2S,6S)-2,6-diaminopimelate = meso-2,6-diaminopimelate. The protein operates within amino-acid biosynthesis; L-lysine biosynthesis via DAP pathway; DL-2,6-diaminopimelate from LL-2,6-diaminopimelate: step 1/1. Catalyzes the stereoinversion of LL-2,6-diaminopimelate (L,L-DAP) to meso-diaminopimelate (meso-DAP), a precursor of L-lysine and an essential component of the bacterial peptidoglycan. This is Diaminopimelate epimerase from Stutzerimonas stutzeri (strain A1501) (Pseudomonas stutzeri).